We begin with the raw amino-acid sequence, 648 residues long: PAN2-PAN3 deadenylation complex subunit PAN3 (648 aa).

Residues 1–24 form a disordered region; sequence MAATRYPPNDLRRQVGSPRSKGRE. The C3H1-type zinc-finger motif lies at 24 to 53; it reads ENKDTLCRNILIYGNCRYEDQGCTFNHDQN. Positions 244 to 506 are pseudokinase domain; the sequence is QVMPNSGLPQ…SIENFISGIA (263 aa). ATP contacts are provided by residues Arg295, 345–352, and 404–405; these read DYHPLSKT and SK. The stretch at 507–545 forms a coiled coil; sequence THMTAFFDLALQDGDEKQFHLARELENGRIARSMMKLMT. The tract at residues 546–648 is knob domain; that stretch reads IIERAEPGGA…SKTGAPGANN (103 aa).

The protein belongs to the protein kinase superfamily. PAN3 family. In terms of assembly, homodimer. Forms a heterotrimer with a catalytic subunit PAN2 to form the poly(A)-nuclease (PAN) deadenylation complex. Interacts (via PAM-2 motif) with poly(A)-binding protein PAB1 (via PABC domain), conferring substrate specificity of the enzyme complex.

The protein resides in the cytoplasm. Functionally, regulatory subunit of the poly(A)-nuclease (PAN) deadenylation complex, one of two cytoplasmic mRNA deadenylases involved in mRNA turnover. PAN specifically shortens poly(A) tails of RNA and the activity is stimulated by poly(A)-binding protein PAB1. PAN deadenylation is followed by rapid degradation of the shortened mRNA tails by the CCR4-NOT complex. Deadenylated mRNAs are then degraded by two alternative mechanisms, namely exosome-mediated 3'-5' exonucleolytic degradation, or deadenylation-dependent mRNA decaping and subsequent 5'-3' exonucleolytic degradation by XRN1. May also be involved in post-transcriptional maturation of mRNA poly(A) tails. PAN3 acts as a positive regulator for PAN activity, recruiting the catalytic subunit PAN2 to mRNA via its interaction with RNA and with PAB1. The sequence is that of PAN2-PAN3 deadenylation complex subunit PAN3 from Chaetomium globosum (strain ATCC 6205 / CBS 148.51 / DSM 1962 / NBRC 6347 / NRRL 1970) (Soil fungus).